We begin with the raw amino-acid sequence, 147 residues long: TRAP-T-associated universal stress protein TeaD (147 aa).

Residues 8-10, Val38, 117-122, and 131-133 contribute to the ATP site; these read PVD, GAQGTN, and SVA.

It belongs to the universal stress protein A family. In terms of assembly, homodimer or homotetramer; in equilibrium. The dimer/tetramer ratio is ATP-dependent. ATP stabilizes dimer-dimer complexes, with one ATP molecule bound to each monomer.

The protein resides in the cytoplasm. In terms of biological role, ATP-binding protein that negatively regulates activity of the tripartite ATP-independent periplasmic (TRAP) ectoine transport system TeaABC. May regulate uptake according to the ATP status of the cell. This Halomonas elongata (strain ATCC 33173 / DSM 2581 / NBRC 15536 / NCIMB 2198 / 1H9) protein is TRAP-T-associated universal stress protein TeaD (teaD).